Consider the following 197-residue polypeptide: Imidazoleglycerol-phosphate dehydratase (197 aa).

It belongs to the imidazoleglycerol-phosphate dehydratase family.

It localises to the cytoplasm. It catalyses the reaction D-erythro-1-(imidazol-4-yl)glycerol 3-phosphate = 3-(imidazol-4-yl)-2-oxopropyl phosphate + H2O. It participates in amino-acid biosynthesis; L-histidine biosynthesis; L-histidine from 5-phospho-alpha-D-ribose 1-diphosphate: step 6/9. In Rhodopseudomonas palustris (strain BisA53), this protein is Imidazoleglycerol-phosphate dehydratase.